Reading from the N-terminus, the 474-residue chain is Siroheme synthase (474 aa).

Residues 1-202 (MEYLPIFIDL…GRPKEANKVL (202 aa)) are precorrin-2 dehydrogenase /sirohydrochlorin ferrochelatase. NAD(+) is bound by residues 22–23 (AV) and 41–42 (PA). At Ser-126 the chain carries Phosphoserine. Residues 218–474 (GHVTLVGAGP…YLINSIINLI (257 aa)) are uroporphyrinogen-III C-methyltransferase. Pro-227 contributes to the S-adenosyl-L-methionine binding site. Catalysis depends on Asp-250, which acts as the Proton acceptor. Lys-272 (proton donor) is an active-site residue. Residues 303–305 (GGD), Ile-308, 333–334 (TA), Met-385, and Gly-414 contribute to the S-adenosyl-L-methionine site.

In the N-terminal section; belongs to the precorrin-2 dehydrogenase / sirohydrochlorin ferrochelatase family. It in the C-terminal section; belongs to the precorrin methyltransferase family.

The catalysed reaction is uroporphyrinogen III + 2 S-adenosyl-L-methionine = precorrin-2 + 2 S-adenosyl-L-homocysteine + H(+). It catalyses the reaction precorrin-2 + NAD(+) = sirohydrochlorin + NADH + 2 H(+). It carries out the reaction siroheme + 2 H(+) = sirohydrochlorin + Fe(2+). Its pathway is cofactor biosynthesis; adenosylcobalamin biosynthesis; precorrin-2 from uroporphyrinogen III: step 1/1. It participates in cofactor biosynthesis; adenosylcobalamin biosynthesis; sirohydrochlorin from precorrin-2: step 1/1. It functions in the pathway porphyrin-containing compound metabolism; siroheme biosynthesis; precorrin-2 from uroporphyrinogen III: step 1/1. The protein operates within porphyrin-containing compound metabolism; siroheme biosynthesis; siroheme from sirohydrochlorin: step 1/1. Its pathway is porphyrin-containing compound metabolism; siroheme biosynthesis; sirohydrochlorin from precorrin-2: step 1/1. In terms of biological role, multifunctional enzyme that catalyzes the SAM-dependent methylations of uroporphyrinogen III at position C-2 and C-7 to form precorrin-2 via precorrin-1. Then it catalyzes the NAD-dependent ring dehydrogenation of precorrin-2 to yield sirohydrochlorin. Finally, it catalyzes the ferrochelation of sirohydrochlorin to yield siroheme. The protein is Siroheme synthase of Blochmanniella pennsylvanica (strain BPEN).